Reading from the N-terminus, the 225-residue chain is Ras-related protein Rab-32 (225 aa).

Residue Ala-2 is modified to N-acetylalanine. 9 residues coordinate GTP: Val-36, Gly-37, Lys-38, Thr-39, Ser-40, Ser-51, Gln-52, Tyr-54, and Thr-57. Thr-39 contacts Mg(2+). Positions 48–62 match the Switch 1 motif; the sequence is QLFSQHYRATIGVDF. Thr-57 contributes to the Mg(2+) binding site. The residue at position 71 (Ser-71) is a Phosphoserine. Residue Asp-81 coordinates Mg(2+). Positions 84, 143, 144, 146, 175, and 176 each coordinate GTP. The Switch 2 signature appears at 84 to 97; sequence GQERFGNMTRVYYK. The tract at residues 178 to 197 is PKA-RII subunit binding domain; that stretch reads NINIEEAARFLVEKILVNHQ. Residues Cys-224 and Cys-225 are each lipidated (S-geranylgeranyl cysteine).

It belongs to the small GTPase superfamily. Rab family. In terms of assembly, interacts with ANKRD27. A decreased interaction with ANKRD27 seen in the presence of SGSM2. Interacts with LRRK2 (via N-terminus); this interaction results in stimulation of RAB10 phosphorylation by LRRK2. Requires Mg(2+) as cofactor. In terms of tissue distribution, widely expressed with high levels in heart, liver, kidney, bone marrow, testis, colon and fetal lung.

The protein localises to the mitochondrion. Its subcellular location is the mitochondrion outer membrane. It is found in the cytoplasmic vesicle. It localises to the phagosome. The protein resides in the phagosome membrane. The protein localises to the melanosome. Its subcellular location is the melanosome membrane. It carries out the reaction GTP + H2O = GDP + phosphate + H(+). Regulated by guanine the nucleotide exchange factor (GEF) BLOC-3 complex composed of HPS1 and HPS4 which promote the exchange of bound GDP for free GTP. Regulated by the GTPase activating protein (GAP) SGSM2/RUTBC1 which increases the GTP hydrolysis activity. Inhibited by GDP dissociation inhibitors (GDIs) which prevent Rab-GDP dissociation. The small GTPases Rab are key regulators of intracellular membrane trafficking, from the formation of transport vesicles to their fusion with membranes. Rabs cycle between an inactive GDP-bound form and an active GTP-bound form that is able to recruit to membranes different set of downstream effectors directly responsible for vesicle formation, movement, tethering and fusion. Also acts as an A-kinase anchoring protein by binding to the type II regulatory subunit of protein kinase A and anchoring it to the mitochondrion. Also involved in synchronization of mitochondrial fission. Plays a role in the maturation of phagosomes that engulf pathogens, such as S.aureus and M.tuberculosis. Plays an important role in the control of melanin production and melanosome biogenesis. In concert with RAB38, regulates the proper trafficking of melanogenic enzymes TYR, TYRP1 and DCT/TYRP2 to melanosomes in melanocytes. Stimulates phosphorylation of RAB10 'Thr-73' by LRRK2. In Homo sapiens (Human), this protein is Ras-related protein Rab-32.